Consider the following 84-residue polypeptide: Beta-cardiotoxin CTX9 (84 aa).

The signal sequence occupies residues 1 to 21 (MKTLLLTLVVVTIVCLDLGYT). Intrachain disulfides connect C24–C43, C36–C61, C65–C76, and C77–C82.

Belongs to the three-finger toxin family. Short-chain subfamily. Aminergic toxin sub-subfamily. As to expression, expressed by the venom gland.

The protein localises to the secreted. In terms of biological role, acts as a beta-blocker by binding to beta-1 and beta-2 adrenergic receptors (ADRB1 and ADRB2). It dose-dependently decreases the heart rate (bradycardia), whereas conventional cardiotoxins increases it. At 100 mg/kg, intraperitoneal injection into mice provokes labored breathing, impaired locomotion, lack of response to external stimuli, and death (after 30 minutes). This chain is Beta-cardiotoxin CTX9, found in Ophiophagus hannah (King cobra).